Here is a 339-residue protein sequence, read N- to C-terminus: Anthranilate phosphoribosyltransferase (339 aa).

5-phospho-alpha-D-ribose 1-diphosphate contacts are provided by residues glycine 81, 84–85 (GD), serine 89, 91–94 (NVSS), 109–117 (KHGNRALSS), and alanine 121. Glycine 81 is a binding site for anthranilate. Serine 93 lines the Mg(2+) pocket. Asparagine 112 serves as a coordination point for anthranilate. Arginine 167 contributes to the anthranilate binding site. Positions 225 and 226 each coordinate Mg(2+).

Belongs to the anthranilate phosphoribosyltransferase family. In terms of assembly, homodimer. Mg(2+) is required as a cofactor.

The catalysed reaction is N-(5-phospho-beta-D-ribosyl)anthranilate + diphosphate = 5-phospho-alpha-D-ribose 1-diphosphate + anthranilate. It participates in amino-acid biosynthesis; L-tryptophan biosynthesis; L-tryptophan from chorismate: step 2/5. In terms of biological role, catalyzes the transfer of the phosphoribosyl group of 5-phosphorylribose-1-pyrophosphate (PRPP) to anthranilate to yield N-(5'-phosphoribosyl)-anthranilate (PRA). The protein is Anthranilate phosphoribosyltransferase of Brucella suis (strain ATCC 23445 / NCTC 10510).